A 127-amino-acid chain; its full sequence is Large-conductance mechanosensitive channel (127 aa).

3 helical membrane-spanning segments follow: residues 9 to 29 (EFAM…GVAF), 32 to 52 (IVTA…LGGI), and 75 to 95 (VIDF…INLL).

It belongs to the MscL family. As to quaternary structure, homopentamer.

Its subcellular location is the cell inner membrane. In terms of biological role, channel that opens in response to stretch forces in the membrane lipid bilayer. May participate in the regulation of osmotic pressure changes within the cell. This chain is Large-conductance mechanosensitive channel, found in Legionella pneumophila subsp. pneumophila (strain Philadelphia 1 / ATCC 33152 / DSM 7513).